The following is a 222-amino-acid chain: GTP cyclohydrolase 1 (222 aa).

Residues cysteine 111, histidine 114, and cysteine 182 each contribute to the Zn(2+) site.

This sequence belongs to the GTP cyclohydrolase I family. Homomer.

The enzyme catalyses GTP + H2O = 7,8-dihydroneopterin 3'-triphosphate + formate + H(+). The protein operates within cofactor biosynthesis; 7,8-dihydroneopterin triphosphate biosynthesis; 7,8-dihydroneopterin triphosphate from GTP: step 1/1. The sequence is that of GTP cyclohydrolase 1 from Salmonella gallinarum (strain 287/91 / NCTC 13346).